The chain runs to 245 residues: Ribosomal RNA large subunit methyltransferase E (245 aa).

Residues 1–25 (MTKSPIGGNRSGRKLGQKVKKGKLK) are disordered. Residues 11-25 (SGRKLGQKVKKGKLK) show a composition bias toward basic residues. Residues G81, W83, D104, D120, and D144 each coordinate S-adenosyl-L-methionine. Catalysis depends on K184, which acts as the Proton acceptor.

It belongs to the class I-like SAM-binding methyltransferase superfamily. RNA methyltransferase RlmE family.

The protein resides in the cytoplasm. The enzyme catalyses uridine(2552) in 23S rRNA + S-adenosyl-L-methionine = 2'-O-methyluridine(2552) in 23S rRNA + S-adenosyl-L-homocysteine + H(+). Its function is as follows. Specifically methylates the uridine in position 2552 of 23S rRNA at the 2'-O position of the ribose in the fully assembled 50S ribosomal subunit. In Sinorhizobium fredii (strain NBRC 101917 / NGR234), this protein is Ribosomal RNA large subunit methyltransferase E.